The primary structure comprises 535 residues: Protein translocase subunit SecD (535 aa).

The next 6 helical transmembrane spans lie at 5-25, 377-397, 402-421, 425-444, 469-489, and 496-516; these read LTWKVVVIVAVLLVFAFGIIG, AIIGFVAVIIFMLIYYKGAGI, SLLLNLVILLGFMGYFGAVL, GIAGVILTVGMGVDSNVLIF, WLTIIDTHVTTIVSAIILFLF, and GFAVTLSFGLFANLFTAVFVS.

It belongs to the SecD/SecF family. SecD subfamily. In terms of assembly, forms a complex with SecF. Part of the essential Sec protein translocation apparatus which comprises SecA, SecYEG and auxiliary proteins SecDF. Other proteins may also be involved.

It is found in the cell inner membrane. Part of the Sec protein translocase complex. Interacts with the SecYEG preprotein conducting channel. SecDF uses the proton motive force (PMF) to complete protein translocation after the ATP-dependent function of SecA. The polypeptide is Protein translocase subunit SecD (Koribacter versatilis (strain Ellin345)).